We begin with the raw amino-acid sequence, 187 residues long: Protein GrpE (187 aa).

Basic and acidic residues predominate over residues 1–15; that stretch reads MKETKQEEMEVREDC. Positions 1 to 40 are disordered; the sequence is MKETKQEEMEVREDCESVDSNLEATVEEMESTKGTSEDLE.

It belongs to the GrpE family. As to quaternary structure, homodimer.

Its subcellular location is the cytoplasm. Participates actively in the response to hyperosmotic and heat shock by preventing the aggregation of stress-denatured proteins, in association with DnaK and GrpE. It is the nucleotide exchange factor for DnaK and may function as a thermosensor. Unfolded proteins bind initially to DnaJ; upon interaction with the DnaJ-bound protein, DnaK hydrolyzes its bound ATP, resulting in the formation of a stable complex. GrpE releases ADP from DnaK; ATP binding to DnaK triggers the release of the substrate protein, thus completing the reaction cycle. Several rounds of ATP-dependent interactions between DnaJ, DnaK and GrpE are required for fully efficient folding. This is Protein GrpE from Alkaliphilus oremlandii (strain OhILAs) (Clostridium oremlandii (strain OhILAs)).